Consider the following 487-residue polypeptide: Iron-sulfur cluster assembly SufBD family protein ycf24 (487 aa).

It belongs to the iron-sulfur cluster assembly SufBD family.

The protein localises to the plastid. It is found in the chloroplast. In Porphyra purpurea (Red seaweed), this protein is Iron-sulfur cluster assembly SufBD family protein ycf24 (ycf24).